A 137-amino-acid polypeptide reads, in one-letter code: Ribonuclease VapC3 (137 aa).

A PINc domain is found at 12 to 129 (VVVDASAMVD…LTTDERLARA (118 aa)). Mg(2+) is bound by residues D15 and D105.

This sequence belongs to the PINc/VapC protein family. The cofactor is Mg(2+).

Its function is as follows. Toxic component of a type II toxin-antitoxin (TA) system. An RNase. Its toxic effect is neutralized by coexpression with cognate antitoxin VapB3. The polypeptide is Ribonuclease VapC3 (Mycobacterium tuberculosis (strain CDC 1551 / Oshkosh)).